Here is a 219-residue protein sequence, read N- to C-terminus: Thiopurine S-methyltransferase (219 aa).

Residues Trp-10, Leu-45, Glu-66, and Arg-123 each contribute to the S-adenosyl-L-methionine site.

The protein belongs to the class I-like SAM-binding methyltransferase superfamily. TPMT family.

The protein resides in the cytoplasm. The enzyme catalyses S-adenosyl-L-methionine + a thiopurine = S-adenosyl-L-homocysteine + a thiopurine S-methylether.. The chain is Thiopurine S-methyltransferase from Shewanella pealeana (strain ATCC 700345 / ANG-SQ1).